We begin with the raw amino-acid sequence, 145 residues long: Arginine repressor (145 aa).

Belongs to the ArgR family.

Its subcellular location is the cytoplasm. The protein operates within amino-acid biosynthesis; L-arginine biosynthesis [regulation]. Functionally, regulates arginine biosynthesis genes. This Streptococcus pyogenes serotype M3 (strain ATCC BAA-595 / MGAS315) protein is Arginine repressor.